We begin with the raw amino-acid sequence, 194 residues long: Lysozyme g-like protein 1 (194 aa).

The first 19 residues, 1 to 19, serve as a signal peptide directing secretion; the sequence is MSALWLLLGLLALMDLSES. Disulfide bonds link cysteine 24–cysteine 80 and cysteine 38–cysteine 49.

This sequence belongs to the glycosyl hydrolase 23 family.

The protein resides in the secreted. The sequence is that of Lysozyme g-like protein 1 (LYG1) from Homo sapiens (Human).